Here is a 202-residue protein sequence, read N- to C-terminus: Imidazoleglycerol-phosphate dehydratase (202 aa).

It belongs to the imidazoleglycerol-phosphate dehydratase family.

The protein localises to the cytoplasm. The catalysed reaction is D-erythro-1-(imidazol-4-yl)glycerol 3-phosphate = 3-(imidazol-4-yl)-2-oxopropyl phosphate + H2O. The protein operates within amino-acid biosynthesis; L-histidine biosynthesis; L-histidine from 5-phospho-alpha-D-ribose 1-diphosphate: step 6/9. In Sinorhizobium fredii (strain NBRC 101917 / NGR234), this protein is Imidazoleglycerol-phosphate dehydratase.